Here is a 214-residue protein sequence, read N- to C-terminus: Phosphatidylserine decarboxylase proenzyme (214 aa).

Catalysis depends on Ser183, which acts as the Schiff-base intermediate with substrate; via pyruvic acid. Pyruvic acid (Ser); by autocatalysis is present on Ser183.

This sequence belongs to the phosphatidylserine decarboxylase family. PSD-A subfamily. In terms of assembly, heterodimer of a large membrane-associated beta subunit and a small pyruvoyl-containing alpha subunit. Requires pyruvate as cofactor. Is synthesized initially as an inactive proenzyme. Formation of the active enzyme involves a self-maturation process in which the active site pyruvoyl group is generated from an internal serine residue via an autocatalytic post-translational modification. Two non-identical subunits are generated from the proenzyme in this reaction, and the pyruvate is formed at the N-terminus of the alpha chain, which is derived from the carboxyl end of the proenzyme. The post-translation cleavage follows an unusual pathway, termed non-hydrolytic serinolysis, in which the side chain hydroxyl group of the serine supplies its oxygen atom to form the C-terminus of the beta chain, while the remainder of the serine residue undergoes an oxidative deamination to produce ammonia and the pyruvoyl prosthetic group on the alpha chain.

It localises to the cell membrane. The enzyme catalyses a 1,2-diacyl-sn-glycero-3-phospho-L-serine + H(+) = a 1,2-diacyl-sn-glycero-3-phosphoethanolamine + CO2. Its pathway is phospholipid metabolism; phosphatidylethanolamine biosynthesis; phosphatidylethanolamine from CDP-diacylglycerol: step 2/2. Its function is as follows. Catalyzes the formation of phosphatidylethanolamine (PtdEtn) from phosphatidylserine (PtdSer). This is Phosphatidylserine decarboxylase proenzyme from Chlorobaculum parvum (strain DSM 263 / NCIMB 8327) (Chlorobium vibrioforme subsp. thiosulfatophilum).